The following is a 616-amino-acid chain: Chaperone protein HscA (616 aa).

The protein belongs to the heat shock protein 70 family.

In terms of biological role, chaperone involved in the maturation of iron-sulfur cluster-containing proteins. Has a low intrinsic ATPase activity which is markedly stimulated by HscB. Involved in the maturation of IscU. The sequence is that of Chaperone protein HscA from Serratia proteamaculans (strain 568).